The sequence spans 530 residues: Pancreatic secretory granule membrane major glycoprotein GP2 (530 aa).

The signal sequence occupies residues 1-21; it reads MVACDLLWLAAASCLLTLVFP. N33 carries an N-linked (GlcNAc...) asparagine glycan. Disulfide bonds link C41–C52, C56–C150, C78–C168, C100–C138, C106–C173, C131–C139, C183–C193, C187–C202, C204–C234, C222–C313, and C254–C277. The D10C stretch occupies residues 54-74; it reads DPCQNHTVLNDPSRSTENTVS. 2 N-linked (GlcNAc...) asparagine glycosylation sites follow: N58 and N127. Positions 179–223 constitute an EGF-like domain; that stretch reads APKKCEIACRPEEECVFQNNSWTCVCRQDLNVSDTLSLQPLLDCG. 2 N-linked (GlcNAc...) asparagine glycosylation sites follow: N197 and N209. The tract at residues 221 to 314 is ZP-N; that stretch reads DCGANEIKVK…FLVNVNFQCA (94 aa). The region spanning 221–477 is the ZP domain; the sequence is DCGANEIKVK…PSCSTSRLRS (257 aa). N284 and N320 each carry an N-linked (GlcNAc...) asparagine glycan. Positions 315–338 are flexible ZP-N/ZP-C linker; the sequence is YPLDMNVSLQTALQPIVSSLNVDV. The segment at 339–350 is internal hydrophobic patch (IHP); it reads GGAGEFTVTMAL. The ZP-C stretch occupies residues 339–477; it reads GGAGEFTVTM…PSCSTSRLRS (139 aa). Cystine bridges form between C394–C454, C415–C470, and C459–C466. Residues 484 to 492 form an external hydrophobic patch (EHP) region; it reads LTRVLDIGP. A lipid anchor (GPI-anchor amidated asparagine) is attached at N505. Residues 506-530 constitute a propeptide, removed in mature form; it reads GTPRNTGFLLAWPTFFLPVFLAWLF.

As to quaternary structure, interacts with SYCN. Interacts with bacterial adhesin fimH. In terms of processing, N-glycosylated. Expressed in pancreas.

It is found in the zymogen granule membrane. The protein resides in the secreted. It localises to the cell membrane. Its subcellular location is the apical cell membrane. The protein localises to the membrane raft. It is found in the endosome. Functionally, functions as an intestinal M-cell transcytotic receptor specific of type-I-piliated bacteria that participates in the mucosal immune response toward these bacteria. At the apical membrane of M-cells it binds fimH, a protein of the bacteria type I pilus tip. Internalizes bound bacteria, like E.coli and S.typhimurium, from the lumen of the intestine and delivers them, through M-cells, to the underlying organized lymphoid follicles where they are captured by antigen-presenting dendritic cells to elicit a mucosal immune response. This chain is Pancreatic secretory granule membrane major glycoprotein GP2, found in Rattus norvegicus (Rat).